The sequence spans 1576 residues: Spermatogenesis-associated protein 31D1 (1576 aa).

A helical transmembrane segment spans residues 29–49 (FICLSGLGLFILYLFYVVLTL). 5 disordered regions span residues 170–197 (FTLASTPSATPPEDLILSPRPKASPPPP), 542–572 (HESPVLPPPQPLSLPSTQPLPLPQTLPQGQS), 782–801 (KDHLLHGPETSSDKDLRSNS), 952–1033 (SQGD…TDFQ), and 1293–1347 (RVSP…PPPE). Residues 546–565 (VLPPPQPLSLPSTQPLPLPQ) are compositionally biased toward pro residues. Positions 966 to 980 (RSTFQGEKLGTTSSV) are enriched in polar residues. The span at 1004–1019 (QFSDTDHDLIETDSKD) shows a compositional bias: basic and acidic residues. Polar residues predominate over residues 1020 to 1032 (GASTSLRRGTTDF).

The protein belongs to the SPATA31 family.

Its subcellular location is the membrane. In terms of biological role, may play a role in spermatogenesis. The chain is Spermatogenesis-associated protein 31D1 (SPATA31D1) from Homo sapiens (Human).